The sequence spans 643 residues: RNA-binding protein MEX3D (643 aa).

2 disordered regions span residues 1–48 (MPGS…DAAA) and 61–92 (GLGGARPGDEGMATRSADGATECGEDEPAPPD). Low complexity predominate over residues 18 to 34 (TAGDPGHPHPALAGAED). Acidic residues predominate over residues 83–92 (CGEDEPAPPD). 2 KH domains span residues 160–221 (MTEC…KREI) and 253–314 (QTTI…REEI). Disordered stretches follow at residues 357–427 (PHPG…GTAT), 471–505 (GAPAQPNTGTRRSSGGGAATTPRHSPTLPEPGGLS), and 519–583 (VGAV…APGP). Residues 405 to 418 (GGSGNGGFTFGGDG) show a composition bias toward gly residues. Thr-491 bears the Phosphothreonine mark. Ser-495 carries the post-translational modification Phosphoserine. 3 stretches are compositionally biased toward low complexity: residues 495-505 (SPTLPEPGGLS), 531-556 (LPPFSGSTTFSTTPSLPSTTLASSTL), and 567-583 (PSTTAANSSASTAAPGP). Residues 592–632 (CVVCSEGEAMAALVPCGHNLFCMDCAVRICGKSEPECPACR) form an RING-type zinc finger.

It is found in the cytoplasm. Its subcellular location is the nucleus. RNA binding protein, may be involved in post-transcriptional regulatory mechanisms. This chain is RNA-binding protein MEX3D (Mex3d), found in Mus musculus (Mouse).